Here is a 489-residue protein sequence, read N- to C-terminus: Putative general secretion pathway protein A (489 aa).

26 to 33 (GEAGSGKT) contacts ATP. The chain crosses the membrane as a helical span at residues 237–257 (MQLAVVMSGTIIALTCGWLLL).

It belongs to the ExeA family.

Its subcellular location is the cell membrane. May play a regulatory role under conditions of derepressed gsp gene expression. The polypeptide is Putative general secretion pathway protein A (gspA) (Escherichia coli (strain K12)).